Reading from the N-terminus, the 260-residue chain is Thrombin-like enzyme bhalternin (260 aa).

The signal sequence occupies residues 1 to 18 (MVLIRVLANLLILQLSYA). The propeptide occupies 19 to 24 (QKASEL). Residues 25–251 (VIGGDECNIN…YSEWIQSIIA (227 aa)) form the Peptidase S1 domain. 5 disulfide bridges follow: Cys31-Cys165, Cys50-Cys66, Cys144-Cys212, Cys176-Cys191, and Cys202-Cys227. Asn44 is a glycosylation site (N-linked (GlcNAc...) asparagine). N-linked (GlcNAc...) asparagine glycosylation occurs at Asn81.

It belongs to the peptidase S1 family. Snake venom subfamily. Monomer. Expressed by the venom gland.

Its subcellular location is the secreted. Inhibited by benzamidine and partially inhibited by EDTA. Thrombin-like snake venom serine protease that induces blood clotting in vitro, defibrinogenation in vivo (by intraperitoneal injection into mice), albuminolytic and fibrinogenolytic activities. Preferentially cleaves the alpha chain of fibrinogen (FGA). Causes hemolysis in the heart, causes apparent hyperemia and lymphocytic interstitial pneumonitis in the lung, causes necrosis and inflammatory infiltrate in the liver, and causes glomerular congestion in the kidney. Also provokes a drastic myonecrosis. The polypeptide is Thrombin-like enzyme bhalternin (Bothrops alternatus (Urutu)).